We begin with the raw amino-acid sequence, 378 residues long: Peptide methionine sulfoxide reductase MsrA/MsrB (378 aa).

A peptide methionine sulfoxide reductase A region spans residues 40–197 (QQATLAGGCF…KVRYNYYRYA (158 aa)). Residue C48 is part of the active site. The 123-residue stretch at 240–362 (DEQIRAKLTS…NSAAMRFIPK (123 aa)) folds into the MsrB domain. C351 acts as the Nucleophile in catalysis.

It in the N-terminal section; belongs to the MsrA Met sulfoxide reductase family. The protein in the C-terminal section; belongs to the MsrB Met sulfoxide reductase family.

The enzyme catalyses L-methionyl-[protein] + [thioredoxin]-disulfide + H2O = L-methionyl-(S)-S-oxide-[protein] + [thioredoxin]-dithiol. It catalyses the reaction [thioredoxin]-disulfide + L-methionine + H2O = L-methionine (S)-S-oxide + [thioredoxin]-dithiol. The catalysed reaction is L-methionyl-[protein] + [thioredoxin]-disulfide + H2O = L-methionyl-(R)-S-oxide-[protein] + [thioredoxin]-dithiol. Functionally, has an important function as a repair enzyme for proteins that have been inactivated by oxidation. Catalyzes the reversible oxidation-reduction of methionine sulfoxide in proteins to methionine. This Vibrio cholerae serotype O1 (strain ATCC 39315 / El Tor Inaba N16961) protein is Peptide methionine sulfoxide reductase MsrA/MsrB (msrAB).